We begin with the raw amino-acid sequence, 498 residues long: ATP synthase subunit beta, chloroplastic (498 aa).

172 to 179 contributes to the ATP binding site; sequence GGAGVGKT.

It belongs to the ATPase alpha/beta chains family. In terms of assembly, F-type ATPases have 2 components, CF(1) - the catalytic core - and CF(0) - the membrane proton channel. CF(1) has five subunits: alpha(3), beta(3), gamma(1), delta(1), epsilon(1). CF(0) has four main subunits: a(1), b(1), b'(1) and c(9-12).

The protein resides in the plastid. It localises to the chloroplast thylakoid membrane. It carries out the reaction ATP + H2O + 4 H(+)(in) = ADP + phosphate + 5 H(+)(out). In terms of biological role, produces ATP from ADP in the presence of a proton gradient across the membrane. The catalytic sites are hosted primarily by the beta subunits. In Nypa fruticans (Nypa palm), this protein is ATP synthase subunit beta, chloroplastic.